The sequence spans 411 residues: MPRLLEELTAVILTHRDAPLDVVGSFESRVGEAYQILRGVVDEAVVLATCNRFEVYALPRRGFVETVIGFLGEASRYARILHGMDVVRHLFRVAAGLESAIIGENEILGQVARAYEEARRRGVAGKYLGLLFSQAVRTGKLVRSRTRISYGNVGAPGAAVKLAREAAGGFDGKHVVVVGAGEAGSIMASLVREEAPTARISIVNRSVDRARELAGKVRGEAYGLDMLPKLLAAADVVLVAVTVNEPVIKRSMLEDVGRHLVVVDISNPPAVEQPIPSNVYYAGLRDVEKVIKEVLAVRIREVPKAEAIVEEQVALLRKLWLKRGADEAIAEIMRYANRVMEEEVEELVSRLRGLGVDGAALLVARSFAYSLTKKLLRPLILYAHEAALEGSLSKLEEIAQKYRDELARRQH.

Residues 49 to 52 (TCNR), Ser99, 104 to 106 (ENE), and Gln110 each bind substrate. Cys50 acts as the Nucleophile in catalysis. Residue 179–184 (GAGEAG) participates in NADP(+) binding.

This sequence belongs to the glutamyl-tRNA reductase family. As to quaternary structure, homodimer.

It carries out the reaction (S)-4-amino-5-oxopentanoate + tRNA(Glu) + NADP(+) = L-glutamyl-tRNA(Glu) + NADPH + H(+). Its pathway is porphyrin-containing compound metabolism; protoporphyrin-IX biosynthesis; 5-aminolevulinate from L-glutamyl-tRNA(Glu): step 1/2. Its function is as follows. Catalyzes the NADPH-dependent reduction of glutamyl-tRNA(Glu) to glutamate 1-semialdehyde (GSA). This chain is Glutamyl-tRNA reductase, found in Hyperthermus butylicus (strain DSM 5456 / JCM 9403 / PLM1-5).